We begin with the raw amino-acid sequence, 671 residues long: DNA ligase (671 aa).

NAD(+) is bound by residues Asp32–Asp36, Ser81–Leu82, and Glu113. The active-site N6-AMP-lysine intermediate is Lys115. The NAD(+) site is built by Arg136, Glu173, Lys290, and Lys314. Zn(2+) contacts are provided by Cys408, Cys411, Cys426, and Cys432. The BRCT domain maps to Glu593–Ala671.

The protein belongs to the NAD-dependent DNA ligase family. LigA subfamily. Requires Mg(2+) as cofactor. Mn(2+) serves as cofactor.

It carries out the reaction NAD(+) + (deoxyribonucleotide)n-3'-hydroxyl + 5'-phospho-(deoxyribonucleotide)m = (deoxyribonucleotide)n+m + AMP + beta-nicotinamide D-nucleotide.. Functionally, DNA ligase that catalyzes the formation of phosphodiester linkages between 5'-phosphoryl and 3'-hydroxyl groups in double-stranded DNA using NAD as a coenzyme and as the energy source for the reaction. It is essential for DNA replication and repair of damaged DNA. This is DNA ligase from Salmonella typhimurium (strain LT2 / SGSC1412 / ATCC 700720).